The primary structure comprises 357 residues: Homeobox protein HMX3 (357 aa).

Disordered stretches follow at residues 1-58 (MPEP…LFAP) and 129-229 (LPRP…RKKK). Pro residues predominate over residues 16-27 (PQPPPPPPPAPK). Composition is skewed to basic and acidic residues over residues 130–140 (PRPEASEKALL) and 149–173 (TDRDSPEPLLKADPDHKELDSKSPD). Serine 153 and serine 180 each carry phosphoserine. A compositionally biased stretch (low complexity) spans 191-209 (AAPGAAGASVGAAAATPGA). A compositionally biased stretch (basic and acidic residues) spans 210–223 (EDWKKGAESPEKKP). Positions 227 to 286 (KKKTRTVFSRSQVFQLESTFDMKRYLSSSERAGLAASLHLTETQVKIWFQNRRNKWKRQL) form a DNA-binding region, homeobox.

Belongs to the HMX homeobox family.

It localises to the nucleus. Transcription factor involved in specification of neuronal cell types and which is required for inner ear and hypothalamus development. Binds to the 5'-CAAGTG-3' core sequence. Controls semicircular canal formation in the inner ear. Also required for hypothalamic/pituitary axis of the CNS. This is Homeobox protein HMX3 (HMX3) from Homo sapiens (Human).